Consider the following 1312-residue polypeptide: DNA repair protein RAD50 (1312 aa).

10 residues coordinate ATP: Arg-13, Asn-36, Gly-37, Gly-39, Lys-40, Thr-41, Thr-42, Ile-65, Asp-67, and Gln-158. Thr-41 provides a ligand contact to Mg(2+). Gln-158 contacts Mg(2+). Coiled coils occupy residues 185–347 and 403–558; these read TKAL…LIRR and QDLT…LQND. Ser-469 carries the post-translational modification Phosphoserine. Thr-568 is subject to Phosphothreonine. Positions 640-678 form a coiled coil; sequence DCTIDEYNDVLEETELSYKTALENLKMHQTTLEFNRKAL. The Zinc-hook domain maps to 640–741; that stretch reads DCTIDEYNDV…SLRLLEKHII (102 aa). 2 residues coordinate Zn(2+): Cys-687 and Cys-690. Coiled-coil stretches lie at residues 712 to 741 and 787 to 1108; these read DANF…KHII and LAES…DIEK.

Belongs to the SMC family. RAD50 subfamily. In terms of assembly, component of the MRN complex composed of two heterodimers RAD50 and MRE11 associated with a single XRS2. The MRN complexes dimerize on DNA to form joined MRN-MRN oligomers required for DNA double-strand break repair. Zn(2+) serves as cofactor.

It localises to the nucleus. It is found in the chromosome. It catalyses the reaction ATP + H2O = ADP + phosphate + H(+). Component of the MRN complex, which plays a central role in double-strand break (DSB) repair, DNA recombination, maintenance of telomere integrity and meiosis. The MRN complex is involved in the repair of DNA double-strand breaks (DSBs) via homologous recombination (HR), an error-free mechanism which primarily occurs during S and G2 phases. The complex (1) mediates the end resection of damaged DNA, which generates proper single-stranded DNA, a key initial steps in HR, and is (2) required for the recruitment of other repair factors and efficient activation of TEL1/ATM and ATR upon DNA damage. The MRN complex possesses single-strand endonuclease activity and double-strand-specific 3'-5' exonuclease activity, which are provided by MRE11, to initiate end resection, which is required for single-strand invasion and recombination. Within the complex, RAD50 is both required to bind DNA ends and hold them in close proximity and regulate the activity of MRE11. RAD50 provides an ATP-dependent control of MRE11 by positioning DNA ends into the MRE11 active site: ATP-binding induces a large structural change from an open form with accessible MRE11 nuclease sites into a closed form. The MRN complex is also required for the processing of R-loops. This chain is DNA repair protein RAD50, found in Saccharomyces cerevisiae (strain ATCC 204508 / S288c) (Baker's yeast).